A 415-amino-acid polypeptide reads, in one-letter code: Serine/threonine transporter SstT (415 aa).

A run of 8 helical transmembrane segments spans residues 23 to 43 (ILIG…AAIA), 47 to 67 (LGTL…LMLV), 85 to 105 (ILFL…LFSF), 144 to 164 (ALLN…GFAL), 181 to 201 (AVTF…FGLV), 220 to 240 (LLVL…LLVF), 293 to 313 (IPLG…VLTL), and 333 to 353 (VVAS…LLLI).

Belongs to the dicarboxylate/amino acid:cation symporter (DAACS) (TC 2.A.23) family.

The protein localises to the cell inner membrane. The enzyme catalyses L-serine(in) + Na(+)(in) = L-serine(out) + Na(+)(out). It carries out the reaction L-threonine(in) + Na(+)(in) = L-threonine(out) + Na(+)(out). Its function is as follows. Involved in the import of serine and threonine into the cell, with the concomitant import of sodium (symport system). The polypeptide is Serine/threonine transporter SstT (Klebsiella pneumoniae (strain 342)).